The chain runs to 351 residues: UDP-3-O-acylglucosamine N-acyltransferase (351 aa).

H240 functions as the Proton acceptor in the catalytic mechanism.

This sequence belongs to the transferase hexapeptide repeat family. LpxD subfamily. In terms of assembly, homotrimer.

It carries out the reaction a UDP-3-O-[(3R)-3-hydroxyacyl]-alpha-D-glucosamine + a (3R)-hydroxyacyl-[ACP] = a UDP-2-N,3-O-bis[(3R)-3-hydroxyacyl]-alpha-D-glucosamine + holo-[ACP] + H(+). Its pathway is bacterial outer membrane biogenesis; LPS lipid A biosynthesis. Catalyzes the N-acylation of UDP-3-O-acylglucosamine using 3-hydroxyacyl-ACP as the acyl donor. Is involved in the biosynthesis of lipid A, a phosphorylated glycolipid that anchors the lipopolysaccharide to the outer membrane of the cell. In Pseudomonas entomophila (strain L48), this protein is UDP-3-O-acylglucosamine N-acyltransferase.